Here is a 318-residue protein sequence, read N- to C-terminus: Methionyl-tRNA formyltransferase (318 aa).

(6S)-5,6,7,8-tetrahydrofolate is bound at residue 112–115; the sequence is SILP.

It belongs to the Fmt family.

It catalyses the reaction L-methionyl-tRNA(fMet) + (6R)-10-formyltetrahydrofolate = N-formyl-L-methionyl-tRNA(fMet) + (6S)-5,6,7,8-tetrahydrofolate + H(+). Functionally, attaches a formyl group to the free amino group of methionyl-tRNA(fMet). The formyl group appears to play a dual role in the initiator identity of N-formylmethionyl-tRNA by promoting its recognition by IF2 and preventing the misappropriation of this tRNA by the elongation apparatus. The chain is Methionyl-tRNA formyltransferase from Haemophilus influenzae (strain ATCC 51907 / DSM 11121 / KW20 / Rd).